The chain runs to 212 residues: Peptide methionine sulfoxide reductase MsrA (212 aa).

Cys-52 is a catalytic residue.

It belongs to the MsrA Met sulfoxide reductase family.

It catalyses the reaction L-methionyl-[protein] + [thioredoxin]-disulfide + H2O = L-methionyl-(S)-S-oxide-[protein] + [thioredoxin]-dithiol. The catalysed reaction is [thioredoxin]-disulfide + L-methionine + H2O = L-methionine (S)-S-oxide + [thioredoxin]-dithiol. Functionally, has an important function as a repair enzyme for proteins that have been inactivated by oxidation. Catalyzes the reversible oxidation-reduction of methionine sulfoxide in proteins to methionine. This chain is Peptide methionine sulfoxide reductase MsrA, found in Yersinia pseudotuberculosis serotype O:1b (strain IP 31758).